Here is a 218-residue protein sequence, read N- to C-terminus: Probable WRKY transcription factor 12 (218 aa).

The span at 49–63 shows a compositional bias: low complexity; sequence SSLSSPSFPIHNSSS. Disordered regions lie at residues 49–120 and 199–218; these read SSLS…DMKN and HNHI…LSSF. Polar residues predominate over residues 64 to 77; sequence TTTTHAPLGFSNNL. Residues 105–116 show a composition bias toward low complexity; the sequence is SNSWWRSNSGSG. Positions 139-204 form a DNA-binding region, WRKY; the sequence is SDVDVLDDGY…YEGRHNHIPS (66 aa).

It belongs to the WRKY group II-c family.

It localises to the nucleus. Its function is as follows. Transcription factor. Interacts specifically with the W box (5'-(T)TGAC[CT]-3'), a frequently occurring elicitor-responsive cis-acting element. This is Probable WRKY transcription factor 12 (WRKY12) from Arabidopsis thaliana (Mouse-ear cress).